Reading from the N-terminus, the 664-residue chain is Semaphorin-7A (664 aa).

A signal peptide spans 1–44; sequence MTPPPPGRAAPSAPRARVLSLPARFGLPLRLRLLLVFWVAAASA. The 436-residue stretch at 53–488 folds into the Sema domain; it reads RISAVWKGQD…SQWEVSQVPL (436 aa). Asparagine 102 carries N-linked (GlcNAc...) asparagine glycosylation. A disulfide bridge connects residues cysteine 117 and cysteine 123. At arginine 132 the chain carries Asymmetric dimethylarginine. Cysteine 140 and cysteine 149 form a disulfide bridge. Residues asparagine 154 and asparagine 256 are each glycosylated (N-linked (GlcNAc...) asparagine). Cystine bridges form between cysteine 264–cysteine 364, cysteine 289–cysteine 333, cysteine 491–cysteine 509, cysteine 498–cysteine 539, cysteine 501–cysteine 516, cysteine 564–cysteine 611, and cysteine 585–cysteine 594. The segment at 265 to 267 is interaction with integrins; that stretch reads RGD. The Cell attachment site signature appears at 265 to 267; that stretch reads RGD. N-linked (GlcNAc...) asparagine glycosylation is present at asparagine 328. Residues 542–627 enclose the Ig-like C2-type domain; that stretch reads PKPDEAPLQK…YLREAQHWEL (86 aa). An N-linked (GlcNAc...) asparagine glycan is attached at asparagine 600. Alanine 646 carries GPI-anchor amidated alanine lipidation. The propeptide at 647-664 is removed in mature form; it reads ASFWLGVLPTLILGLLVH.

The protein belongs to the semaphorin family. In terms of assembly, interacts with PLXNC1. Interacts with ITGA1 and ITGB1. Highly expressed in activated T-cells (at protein level). Highest expression in brain. Lower in heart, thymus, spleen, testis and ovary. The expression increases in late embryonic and postnatal stages. Detected in T-cells.

It is found in the cell membrane. Functionally, plays an important role in integrin-mediated signaling and functions both in regulating cell migration and immune responses. Promotes formation of focal adhesion complexes, activation of the protein kinase PTK2/FAK1 and subsequent phosphorylation of MAPK1 and MAPK3. Promotes production of pro-inflammatory cytokines by monocytes and macrophages. Plays an important role in modulating inflammation and T-cell-mediated immune responses. Promotes axon growth in the embryonic olfactory bulb. Promotes attachment, spreading and dendrite outgrowth in melanocytes. The sequence is that of Semaphorin-7A (Sema7a) from Mus musculus (Mouse).